We begin with the raw amino-acid sequence, 692 residues long: Mitogen-activated protein kinase kinase kinase 7-interacting protein 3 homolog (692 aa).

The CUE domain occupies 8 to 51 (LDIQVLNDLQQRFPEIPRDVVSQCMLQNNSNLDACYRALTQESC). Disordered regions lie at residues 138 to 159 (NDQN…GVGT), 206 to 333 (YGTP…PYGP), and 349 to 427 (SQQR…VVMS). Polar residues-rich tracts occupy residues 215–230 (PSQN…NTAW), 249–298 (QSFQ…QTSH), and 349–387 (SQQR…SGSP). The span at 409–422 (SQPPTTTGSPTPSS) shows a compositional bias: low complexity. The stretch at 496–580 (ALLLHQRARM…QKEIDLLQSR (85 aa)) forms a coiled coil. Residues 598 to 662 (SPGPAVPPNT…SPRPGRDEDF (65 aa)) form a disordered region. Over residues 608 to 620 (CKKESSETTSGER) the composition is skewed to basic and acidic residues. The RanBP2-type zinc finger occupies 662–692 (FEGSPWNCNSCTFLNHPALNRCEQCEMPRFT).

In terms of biological role, may play a role in signaling pathway. The chain is Mitogen-activated protein kinase kinase kinase 7-interacting protein 3 homolog (map3k7ip3) from Xenopus laevis (African clawed frog).